The following is a 169-amino-acid chain: Desumoylating isopeptidase 1 (169 aa).

The PPPDE domain occupies 8–150; it reads HLVRLYVYDM…LGQALRPLLD (143 aa). The active site involves His39. Positions 84-92 match the Nuclear export signal 1 motif; sequence IFLEYLSSL. Residue Cys109 is part of the active site. A Nuclear export signal 2 motif is present at residues 140-154; that stretch reads PLGQALRPLLDSVQI.

It belongs to the DeSI family. As to quaternary structure, homodimer.

It localises to the cytoplasm. The protein resides in the nucleus. The enzyme catalyses S-hexadecanoyl-L-cysteinyl-[protein] + H2O = L-cysteinyl-[protein] + hexadecanoate + H(+). Protease which deconjugates SUMO1, SUMO2 and SUMO3 from some substrate proteins. Has isopeptidase but not SUMO-processing activity. Collaborates with ubqln4 in the export of ubiquitinated proteins from the nucleus to the cytoplasm. Exhibits palmitoyl protein thioesterase (S-depalmitoylation) activity towards synthetic substrates 4-methylumbelliferyl-6-S-palmitoyl-beta-D-glucopyranoside and S-depalmitoylation probe 5 (DPP-5). This chain is Desumoylating isopeptidase 1, found in Xenopus laevis (African clawed frog).